The following is a 543-amino-acid chain: MAKELKFSEDARSAMLRGVDKLADTVKTTIGPKGRNVVLEQSYGSPTITNDGVTIAKSIELEDHFENMGAKLVSEVASKTNDIAGDGTTTATVLTQAIVTEGMKNVTAGANPVGIRRGIEKATAAAVEGLKKMSHDVKTKDDIAQIASISAANKEVGKLIADAMEKVGNDGVITIEDSRGVDTSVDVVEGMSFDRGYMSQYMVTDNDKMEANLDNPYVLITDKKISNIQDILPLLQSVVQEGRALLIIADDITGEALPTLVLNKIRGTFNVVAVKAPGFGDRRKAQLEDIAVLTGGTVISDDLGMQLKDATIDQLGSANKVTITKDATTIVDGSGNKEAIAERVDQIKKAIAETTSDFDKEKLQERLAKLAGGVAVVKVGAATETELKEKKYRIEDALNATRAAVQEGFVPGGGTALVNVIPALDEVEASATGDEATGIKIVKAALEAPVRQIAENAGLEGSVIVNQLKQEKPGVGYNAADDKFEDMVAAGIVDPTKVTRSALQNAASVSALLLTTEAVVADKPQPADAAPQAPVAGGMGGMM.

ATP contacts are provided by residues 29-32, 86-90, glycine 413, 478-480, and aspartate 494; these read TIGP, DGTTT, and NAA.

It belongs to the chaperonin (HSP60) family. As to quaternary structure, forms a cylinder of 14 subunits composed of two heptameric rings stacked back-to-back. Interacts with the co-chaperonin GroES.

Its subcellular location is the cytoplasm. It carries out the reaction ATP + H2O + a folded polypeptide = ADP + phosphate + an unfolded polypeptide.. Functionally, together with its co-chaperonin GroES, plays an essential role in assisting protein folding. The GroEL-GroES system forms a nano-cage that allows encapsulation of the non-native substrate proteins and provides a physical environment optimized to promote and accelerate protein folding. This chain is Chaperonin GroEL, found in Limosilactobacillus fermentum (strain NBRC 3956 / LMG 18251) (Lactobacillus fermentum).